We begin with the raw amino-acid sequence, 483 residues long: Leukocyte immunoglobulin-like receptor subfamily A member 2 (483 aa).

Residues 1–23 (MTPILTVLICLGLSLGPRTHVQA) form the signal peptide. The Extracellular portion of the chain corresponds to 24-449 (GHLPKPTLWA…QHPQDYTVEN (426 aa)). Ig-like C2-type domains follow at residues 27–113 (PKPT…DPLE), 117–222 (TGAY…GVSK), 224–313 (PSLS…DPLD), and 324–413 (PSLS…SDPL). C49 and C97 are oxidised to a cystine. Residues N64, N103, and N138 are each glycosylated (N-linked (GlcNAc...) asparagine). 2 cysteine pairs are disulfide-bonded: C143–C195 and C244–C295. 3 N-linked (GlcNAc...) asparagine glycosylation sites follow: N279, N300, and N339. Residues C344 and C395 are joined by a disulfide bond. 3'-nitrotyrosine is present on Y404. N429 is a glycosylation site (N-linked (GlcNAc...) asparagine). Residues 450–470 (LIRMGVAGLVLVVLGILLFEA) form a helical membrane-spanning segment. The Cytoplasmic segment spans residues 471–483 (QHSQRSLQDAAGR).

In terms of assembly, homodimer. In terms of tissue distribution, detected on the surface of all peripheral blood monocytes, neutrophils, basophils and eosinophils (at protein level). Expression levels are very low or not detectable on monocytes, T-cells, B-cells, dendritic cells and natural killer (NK) cells.

Its subcellular location is the cell membrane. It is found in the secreted. Functionally, part of the innate immune responses against microbial infection. Specifically recognizes a set of N-terminally truncated immunoglobulins that are produced via cleavage by proteases from a range of pathogenic bacteria and fungi, including L.pneumophila, M.hyorhinis, S.pneumoniae, S.aureus and C.albicans. Recognizes epitopes that are in part in the variable region of the immunoglobulin light chains, but requires also the constant region for signaling. Binds to a subset of cleaved IgM, IgG3 and IgG4 molecules, but does not bind cleaved IgA1. Binding of N-terminally truncated immunoglobulins mediates activation of neutrophils. In monocytes, activation leads to the release of CSF2, CF3, IL6, CXCL8 and CCL3 and down-regulates responses to bacterial lipopolysaccharide (LPS), possibly via down-regulation of TLR4 expression and reduced signaling via TLR4. In eosinophils, activation by ligand binding leads to the release of RNASE2, IL4 and leukotriene C4. Does not bind class I MHC antigens. This Homo sapiens (Human) protein is Leukocyte immunoglobulin-like receptor subfamily A member 2 (LILRA2).